The chain runs to 732 residues: Acylamino-acid-releasing enzyme (732 aa).

The residue at position 1 (M1) is an N-acetylmethionine. Phosphoserine is present on residues S185 and S187. Residues S587, D675, and H707 each act as charge relay system in the active site.

The protein belongs to the peptidase S9C family. In terms of assembly, homotetramer.

It localises to the cytoplasm. The catalysed reaction is Cleavage of an N-acetyl or N-formyl amino acid from the N-terminus of a polypeptide.. With respect to regulation, homotetramerization is required for activity. Tetramerization results in the formation of a gated channel which is involved in substrate selection and substrate access to the catalytic sites. Functionally, this enzyme catalyzes the hydrolysis of the N-terminal peptide bond of an N-acetylated peptide to generate an N-acetylated amino acid and a peptide with a free N-terminus. It preferentially cleaves off Ac-Ala, Ac-Met and Ac-Ser. Also, involved in the degradation of oxidized and glycated proteins. This is Acylamino-acid-releasing enzyme (Apeh) from Mus musculus (Mouse).